Here is a 1203-residue protein sequence, read N- to C-terminus: DNA-directed RNA polymerase subunit beta' (1203 aa).

The Zn(2+) site is built by cysteine 60, cysteine 62, cysteine 75, and cysteine 78. Residues aspartate 449, aspartate 451, and aspartate 453 each coordinate Mg(2+). Zn(2+) is bound by residues cysteine 818, cysteine 892, cysteine 899, and cysteine 902.

This sequence belongs to the RNA polymerase beta' chain family. In terms of assembly, the RNAP catalytic core consists of 2 alpha, 1 beta, 1 beta' and 1 omega subunit. When a sigma factor is associated with the core the holoenzyme is formed, which can initiate transcription. It depends on Mg(2+) as a cofactor. The cofactor is Zn(2+).

It carries out the reaction RNA(n) + a ribonucleoside 5'-triphosphate = RNA(n+1) + diphosphate. DNA-dependent RNA polymerase catalyzes the transcription of DNA into RNA using the four ribonucleoside triphosphates as substrates. The chain is DNA-directed RNA polymerase subunit beta' from Bacillus cereus (strain ATCC 10987 / NRS 248).